Here is a 140-residue protein sequence, read N- to C-terminus: Profilin (140 aa).

This sequence belongs to the profilin family. As to quaternary structure, occurs in many kinds of cells as a complex with monomeric actin in a 1:1 ratio.

In terms of biological role, binds to actin and affects the structure of the cytoskeleton. At high concentrations, profilin prevents the polymerization of actin, whereas it enhances it at low concentrations. By binding to PIP2, it inhibits the formation of IP3 and DG. This chain is Profilin, found in Suberites domuncula (Sponge).